The primary structure comprises 120 residues: Large ribosomal subunit protein bL17 (120 aa).

This sequence belongs to the bacterial ribosomal protein bL17 family. In terms of assembly, part of the 50S ribosomal subunit. Contacts protein L32.

The chain is Large ribosomal subunit protein bL17 from Mycoplasmopsis synoviae (strain 53) (Mycoplasma synoviae).